A 449-amino-acid polypeptide reads, in one-letter code: Tubulin beta-8 chain (449 aa).

GTP is bound by residues Gln-11, Glu-69, Ser-138, Gly-142, Thr-143, Gly-144, Asn-204, and Asn-226. Glu-69 is a binding site for Mg(2+). The tract at residues 428–449 (ATADEEEGYEYEEDEVEVQEEQ) is disordered. Residues 429-449 (TADEEEGYEYEEDEVEVQEEQ) show a composition bias toward acidic residues.

It belongs to the tubulin family. As to quaternary structure, dimer of alpha and beta chains. A typical microtubule is a hollow water-filled tube with an outer diameter of 25 nm and an inner diameter of 15 nM. Alpha-beta heterodimers associate head-to-tail to form protofilaments running lengthwise along the microtubule wall with the beta-tubulin subunit facing the microtubule plus end conferring a structural polarity. Microtubules usually have 13 protofilaments but different protofilament numbers can be found in some organisms and specialized cells. Mg(2+) is required as a cofactor.

Its subcellular location is the cytoplasm. It localises to the cytoskeleton. Its function is as follows. Tubulin is the major constituent of microtubules, a cylinder consisting of laterally associated linear protofilaments composed of alpha- and beta-tubulin heterodimers. Microtubules grow by the addition of GTP-tubulin dimers to the microtubule end, where a stabilizing cap forms. Below the cap, tubulin dimers are in GDP-bound state, owing to GTPase activity of alpha-tubulin. The polypeptide is Tubulin beta-8 chain (TUBB8) (Arabidopsis thaliana (Mouse-ear cress)).